We begin with the raw amino-acid sequence, 111 residues long: T cell receptor beta variable 29-1 (111 aa).

The signal sequence occupies residues 1–16; sequence MLSLLLLLLGLGSVFS. An Ig-like domain is found at 17 to 111; that stretch reads AVISQKPSRD…DSSIYLCSVE (95 aa). Cysteine 38 and cysteine 108 are joined by a disulfide. N-linked (GlcNAc...) asparagine glycosylation is present at asparagine 87.

In terms of assembly, alpha-beta TR is a heterodimer composed of an alpha and beta chain; disulfide-linked. The alpha-beta TR is associated with the transmembrane signaling CD3 coreceptor proteins to form the TR-CD3 (TcR or TCR). The assembly of alpha-beta TR heterodimers with CD3 occurs in the endoplasmic reticulum where a single alpha-beta TR heterodimer associates with one CD3D-CD3E heterodimer, one CD3G-CD3E heterodimer and one CD247 homodimer forming a stable octameric structure. CD3D-CD3E and CD3G-CD3E heterodimers preferentially associate with TR alpha and TR beta chains, respectively. The association of the CD247 homodimer is the last step of TcR assembly in the endoplasmic reticulum and is required for transport to the cell surface.

It localises to the cell membrane. V region of the variable domain of T cell receptor (TR) beta chain that participates in the antigen recognition. Alpha-beta T cell receptors are antigen specific receptors which are essential to the immune response and are present on the cell surface of T lymphocytes. Recognize peptide-major histocompatibility (MH) (pMH) complexes that are displayed by antigen presenting cells (APC), a prerequisite for efficient T cell adaptive immunity against pathogens. Binding of alpha-beta TR to pMH complex initiates TR-CD3 clustering on the cell surface and intracellular activation of LCK that phosphorylates the ITAM motifs of CD3G, CD3D, CD3E and CD247 enabling the recruitment of ZAP70. In turn ZAP70 phosphorylates LAT, which recruits numerous signaling molecules to form the LAT signalosome. The LAT signalosome propagates signal branching to three major signaling pathways, the calcium, the mitogen-activated protein kinase (MAPK) kinase and the nuclear factor NF-kappa-B (NF-kB) pathways, leading to the mobilization of transcription factors that are critical for gene expression and essential for T cell growth and differentiation. The T cell repertoire is generated in the thymus, by V-(D)-J rearrangement. This repertoire is then shaped by intrathymic selection events to generate a peripheral T cell pool of self-MH restricted, non-autoaggressive T cells. Post-thymic interaction of alpha-beta TR with the pMH complexes shapes TR structural and functional avidity. In Homo sapiens (Human), this protein is T cell receptor beta variable 29-1.